Consider the following 434-residue polypeptide: [Pyruvate dehydrogenase (acetyl-transferring)] kinase isozyme 1, mitochondrial (434 aa).

The transit peptide at 1–26 directs the protein to the mitochondrion; the sequence is MRLARLLRGGTSVRPLCAVPCASRSL. Y136 bears the Phosphotyrosine; by FGFR1 mark. Residues 161 to 391 form the Histidine kinase domain; the sequence is TEYKESFGVD…DAVIYIKALS (231 aa). At Y241 the chain carries Phosphotyrosine; by FGFR1, ABL1, FLT3 and JAK2. Y242 carries the phosphotyrosine; by FGFR1 modification. Residues 277–284, D316, 335–336, and 352–357 contribute to the ATP site; these read ELFKNAMR, ST, and GFGYGL. Phosphothreonine is present on T336. Residue K403 is modified to N6-succinyllysine.

The protein belongs to the PDK/BCKDK protein kinase family. As to quaternary structure, homodimer, and heterodimer with PDK2. Interacts with the pyruvate dehydrogenase complex subunit DLAT, and is part of the multimeric pyruvate dehydrogenase complex that contains multiple copies of pyruvate dehydrogenase (E1), dihydrolipoamide acetyltransferase (DLAT, E2) and lipoamide dehydrogenase (DLD, E3). Interacts with phosphoglycerate kinase PGK1; the interaction is direct, occurs under hypoxic conditions and leads to PDK1-mediated inhibition of pyruvate dehydrogenase complex activity. In terms of processing, phosphorylated by constitutively activated ABL1, FGFR1, FLT3 and JAK2 (in vitro), and this may also occur in cancer cells that express constitutively activated ABL1, FGFR1, FLT3 and JAK2. Phosphorylation at Tyr-241 and Tyr-242 strongly increases kinase activity, while phosphorylation at Tyr-136 has a lesser effect. Phosphorylated under hypoxic conditions at Thr-336 by phosphoglycerate kinase PGK1 which has an activating effect. In terms of tissue distribution, detected in pancreas islets (at protein level). Expressed predominantly in the heart.

It localises to the mitochondrion matrix. The catalysed reaction is L-seryl-[pyruvate dehydrogenase E1 alpha subunit] + ATP = O-phospho-L-seryl-[pyruvate dehydrogenase E1 alpha subunit] + ADP + H(+). With respect to regulation, activated by binding to the pyruvate dehydrogenase complex subunit DLAT. Strongly activated by NADH plus acetyl-coenzyme A. Inhibited by dichloroacetate. Its function is as follows. Kinase that plays a key role in regulation of glucose and fatty acid metabolism and homeostasis via phosphorylation of the pyruvate dehydrogenase subunits PDHA1 and PDHA2. This inhibits pyruvate dehydrogenase activity, and thereby regulates metabolite flux through the tricarboxylic acid cycle, down-regulates aerobic respiration and inhibits the formation of acetyl-coenzyme A from pyruvate. Plays an important role in cellular responses to hypoxia and is important for cell proliferation under hypoxia. This is [Pyruvate dehydrogenase (acetyl-transferring)] kinase isozyme 1, mitochondrial (Pdk1) from Rattus norvegicus (Rat).